Reading from the N-terminus, the 444-residue chain is CCA-adding enzyme (444 aa).

ATP contacts are provided by serine 57 and arginine 60. Serine 57 and arginine 60 together coordinate CTP. Positions 69, 71, and 124 each coordinate Mg(2+). The ATP site is built by histidine 147, lysine 168, and tyrosine 177. The CTP site is built by histidine 147, lysine 168, and tyrosine 177.

This sequence belongs to the tRNA nucleotidyltransferase/poly(A) polymerase family. Archaeal CCA-adding enzyme subfamily. As to quaternary structure, homodimer. Mg(2+) is required as a cofactor.

The enzyme catalyses a tRNA precursor + 2 CTP + ATP = a tRNA with a 3' CCA end + 3 diphosphate. It carries out the reaction a tRNA with a 3' CCA end + 2 CTP + ATP = a tRNA with a 3' CCACCA end + 3 diphosphate. Catalyzes the addition and repair of the essential 3'-terminal CCA sequence in tRNAs without using a nucleic acid template. Adds these three nucleotides in the order of C, C, and A to the tRNA nucleotide-73, using CTP and ATP as substrates and producing inorganic pyrophosphate. tRNA 3'-terminal CCA addition is required both for tRNA processing and repair. Also involved in tRNA surveillance by mediating tandem CCA addition to generate a CCACCA at the 3' terminus of unstable tRNAs. While stable tRNAs receive only 3'-terminal CCA, unstable tRNAs are marked with CCACCA and rapidly degraded. In Methanococcus maripaludis (strain C7 / ATCC BAA-1331), this protein is CCA-adding enzyme.